Here is a 782-residue protein sequence, read N- to C-terminus: Transcription factor SOX-30 (782 aa).

3 disordered regions span residues 1–37 (MERA…AQPV), 95–117 (LPPG…AAAA), and 139–226 (PPQS…DALK). Pro residues-rich tracts occupy residues 7 to 35 (EPPP…PPAQ) and 97 to 106 (PGGPGVPPAP). The span at 203–226 (LDGRRSDEKKAKLEAEEAPRDALK) shows a compositional bias: basic and acidic residues. The segment at residues 366-434 (VKRPMNAFMV…KHREEFPGWV (69 aa)) is a DNA-binding region (HMG box). 3 disordered regions span residues 501–604 (PTPA…STCP), 704–724 (YPDE…DGPP), and 756–782 (ASAP…LRNL). Polar residues predominate over residues 512–522 (TLFQPSVSSTG). Over residues 525 to 538 (AVPPPSLTPRPSLP) the composition is skewed to pro residues. Residues 555–574 (SGSSRSVKRSTPGSLESTTR) show a composition bias toward polar residues. The span at 704 to 718 (YPDEHTHSEDSRSCE) shows a compositional bias: basic and acidic residues.

Interacts with CTNNB1, competitively inhibiting CTNNB1-TCF7L2/TCF4 interaction. As to expression, expressed in the lung (at protein level). Expressed in testes (at protein level). Expressed in preleptotene spermatocytes, round spermatids, and elongated spermatids in the testis (at protein level). Expressed in pachytene spermatocytes during stages 3 to 8 of spermatogenesis (at protein level). Increased expression in diplotene spermatocytes at stage 9-11 and in metaphase spermatocytes or secondary spermatocytes at stage 12. Expressed in ovaries.

It localises to the nucleus. It is found in the cytoplasm. Functionally, acts both as a transcriptional activator and a repressor. Binds to the DNA sequence 5'-ACAAT-3' and shows a preference for guanine residues surrounding this core motif. Binds to its own promoter and activates its own transcription. Required to activate the expression of postmeiotic genes involved in spermiogenesis. Binds to the promoter region of CTNNB1 and represses its transcription which leads to inhibition of Wnt signaling. Also inhibits Wnt signaling by binding to the CTNNB1 protein, preventing interaction of CTNNB1 with TCF7L2/TCF4. The sequence is that of Transcription factor SOX-30 (Sox30) from Mus musculus (Mouse).